The primary structure comprises 268 residues: Phosphate import ATP-binding protein PstB 3 (268 aa).

The 240-residue stretch at 15–254 (LRTENLNVYY…DATESIFNNP (240 aa)) folds into the ABC transporter domain. 47-54 (GPSGCGKS) contributes to the ATP binding site.

It belongs to the ABC transporter superfamily. Phosphate importer (TC 3.A.1.7) family. In terms of assembly, the complex is composed of two ATP-binding proteins (PstB), two transmembrane proteins (PstC and PstA) and a solute-binding protein (PstS).

Its subcellular location is the cell inner membrane. It catalyses the reaction phosphate(out) + ATP + H2O = ADP + 2 phosphate(in) + H(+). Part of the ABC transporter complex PstSACB involved in phosphate import. Responsible for energy coupling to the transport system. The sequence is that of Phosphate import ATP-binding protein PstB 3 from Nostoc sp. (strain PCC 7120 / SAG 25.82 / UTEX 2576).